Reading from the N-terminus, the 261-residue chain is uncharacterized protein (261 aa).

Residues 20–34 show a composition bias toward polar residues; sequence TMSTPFLESDNSNTQ. A disordered region spans residues 20 to 55; it reads TMSTPFLESDNSNTQSISGRIGSNNNSNSKNSGGIG. A compositionally biased stretch (low complexity) spans 35–51; sequence SISGRIGSNNNSNSKNS. The next 3 helical transmembrane spans lie at 113–133, 183–200, and 204–226; these read LFSG…ILLL, LIFW…ILFF, and IISL…MANV.

Belongs to the TVP23 family.

Its subcellular location is the membrane. This is an uncharacterized protein from Dictyostelium discoideum (Social amoeba).